The sequence spans 176 residues: PPE family protein PPE57 (176 aa).

This sequence belongs to the mycobacterial PPE family. As to quaternary structure, interacts with human TLR2.

The protein localises to the secreted. Its subcellular location is the cell wall. It is found in the cell surface. In terms of biological role, plays a key role in regulating innate and adaptive immune responses through human Toll-like receptor 2 (TLR2). Interacts with TLR2, leading to the subsequent activation of the mitogen-activated protein kinase (MAPK) and nuclear factor kappa B (NF-kappa-B) signaling pathways. Induces macrophage activation by augmenting the expression of several cell surface molecules (CD40, CD80, CD86 and MHC class II) and pro-inflammatory cytokines (TNF-alpha, IL-6 and IL-12p40) within macrophages. Also participates in adaptive immunity by directing Th1-polarised immune responses. Stimulates specific humoral and cellular immune responses in tuberculosis (TB) patients. Induces a strong IgG(1) antibody response and an increased Th1/Th2 type immune response in mice. This chain is PPE family protein PPE57, found in Mycobacterium tuberculosis (strain ATCC 25618 / H37Rv).